A 330-amino-acid polypeptide reads, in one-letter code: Pre-mRNA-splicing factor 38 (330 aa).

The disordered stretch occupies residues 182-330 (SVLDEDLDDE…SRGERDRRRY (149 aa)). Positions 184 to 199 (LDEDLDDELPSDEEKA) are enriched in acidic residues. Over residues 213-224 (RRPRRVRSKSRS) the composition is skewed to basic residues. Basic and acidic residues predominate over residues 240–330 (RSRDYYDELE…SRGERDRRRY (91 aa)).

This sequence belongs to the PRP38 family. In terms of assembly, component of the spliceosome C complex. Interacts with Mfap1 (via C-terminus). In terms of tissue distribution, detected in all germal and follicle cells.

It localises to the nucleus. Required for pre-mRNA splicing. In Drosophila melanogaster (Fruit fly), this protein is Pre-mRNA-splicing factor 38.